We begin with the raw amino-acid sequence, 147 residues long: Small ribosomal subunit protein uS12 (147 aa).

This sequence belongs to the universal ribosomal protein uS12 family. In terms of assembly, part of the 30S ribosomal subunit.

In terms of biological role, with S4 and S5 plays an important role in translational accuracy. Located at the interface of the 30S and 50S subunits. The sequence is that of Small ribosomal subunit protein uS12 from Pyrococcus abyssi (strain GE5 / Orsay).